A 521-amino-acid polypeptide reads, in one-letter code: Probable rhamnogalacturonase B (521 aa).

Positions 1–21 are cleaved as a signal peptide; that stretch reads MRLHAFTLLSLLGLVPSFAAA. The cysteines at positions 42 and 68 are disulfide-linked. Asn145 carries N-linked (GlcNAc...) asparagine glycosylation. Asp219 (proton donor) is an active-site residue. The cysteines at positions 221 and 238 are disulfide-linked. N-linked (GlcNAc...) asparagine glycosylation is present at Asn239. His294 is an active-site residue. Asn321 is a glycosylation site (N-linked (GlcNAc...) asparagine). 2 disulfide bridges follow: Cys344–Cys350 and Cys372–Cys381. The disordered stretch occupies residues 462–521; the sequence is ETPAAASRSEQVVQGAPQETGQSAPESAGPVPSGNPGPVPTGGSRPSRHRHGHHHFGSAI. The span at 469-486 shows a compositional bias: polar residues; sequence RSEQVVQGAPQETGQSAP. The span at 507 to 521 shows a compositional bias: basic residues; sequence PSRHRHGHHHFGSAI.

Belongs to the glycosyl hydrolase 28 family.

The protein resides in the secreted. It catalyses the reaction Endohydrolysis of alpha-D-GalA-(1-&gt;2)-alpha-L-Rha glycosidic bond in the rhamnogalacturonan I backbone with initial inversion of anomeric configuration releasing oligosaccharides with beta-D-GalA at the reducing end.. In terms of biological role, pectinolytic enzymes consist of four classes of enzymes: pectine lyase, polygalacturonase, pectin methylesterase and rhamnogalacturonase. Hydrolyzes alpha-D-galacturonopyranosyl-(1,2)-alpha-L-rhamnopyranosyl linkages in the backbone of the hairy regions of pectins. This chain is Probable rhamnogalacturonase B (rhgB), found in Aspergillus fumigatus (strain ATCC MYA-4609 / CBS 101355 / FGSC A1100 / Af293) (Neosartorya fumigata).